The chain runs to 98 residues: Sec-independent protein translocase protein TatA (98 aa).

Residues 1–21 (MGAMSPWHWAIVALVVVILFG) form a helical membrane-spanning segment. Positions 43-98 (VKEMQNDNSTPAPTAQSAPPPQSAPAELPVADTTTAPVTPPAPVQPQSQHTEPKSA) are disordered. Residues 66-79 (APAELPVADTTTAP) show a composition bias toward low complexity.

This sequence belongs to the TatA/E family. The Tat system comprises two distinct complexes: a TatABC complex, containing multiple copies of TatA, TatB and TatC subunits, and a separate TatA complex, containing only TatA subunits. Substrates initially bind to the TatABC complex, which probably triggers association of the separate TatA complex to form the active translocon.

The protein localises to the cell membrane. Part of the twin-arginine translocation (Tat) system that transports large folded proteins containing a characteristic twin-arginine motif in their signal peptide across membranes. TatA could form the protein-conducting channel of the Tat system. This chain is Sec-independent protein translocase protein TatA, found in Rhodococcus erythropolis (Arthrobacter picolinophilus).